A 386-amino-acid polypeptide reads, in one-letter code: Histidine decarboxylase (386 aa).

His-120 provides a ligand contact to substrate. The residue at position 233 (Lys-233) is an N6-(pyridoxal phosphate)lysine.

Belongs to the group II decarboxylase family. As to quaternary structure, homotetramer. It depends on pyridoxal 5'-phosphate as a cofactor.

It carries out the reaction L-histidine + H(+) = histamine + CO2. The protein operates within siderophore biosynthesis; anguibactin biosynthesis. This Vibrio anguillarum (strain ATCC 68554 / 775) (Listonella anguillarum) protein is Histidine decarboxylase.